The sequence spans 491 residues: Glutamine synthetase (491 aa).

A GS beta-grasp domain is found at 23-111; that stretch reads NNVRQVLCAF…MFGNVYEAWG (89 aa). Residues 119–491 form the GS catalytic domain; sequence PRGYVAKRYE…PWEFMKYFDI (373 aa). Mg(2+)-binding residues include glutamate 143 and glutamate 145. ATP is bound at residue glutamate 225. Mg(2+) contacts are provided by glutamate 230 and glutamate 238. L-glutamate-binding positions include 282–283 and alanine 283; that span reads NA. Residue histidine 287 coordinates Mg(2+). Residues 289-291 and serine 291 each bind ATP; that span reads HQS. L-glutamate contacts are provided by arginine 344, glutamate 350, and arginine 362. Arginine 362 and arginine 367 together coordinate ATP. Position 381 (glutamate 381) interacts with Mg(2+). Arginine 383 serves as a coordination point for L-glutamate.

Belongs to the glutamine synthetase family. In terms of assembly, oligomer of 12 subunits arranged in the form of two hexagons. Requires Mg(2+) as cofactor.

The protein resides in the cytoplasm. It catalyses the reaction L-glutamate + NH4(+) + ATP = L-glutamine + ADP + phosphate + H(+). Probably involved in nitrogen metabolism via ammonium assimilation. Catalyzes the ATP-dependent biosynthesis of glutamine from glutamate and ammonia. Beta-glutamate is a much poorer substrate than alpha-glutamate. The protein is Glutamine synthetase of Archaeoglobus fulgidus (strain ATCC 49558 / DSM 4304 / JCM 9628 / NBRC 100126 / VC-16).